The chain runs to 472 residues: Spliceosome-associated protein CWC27 homolog (472 aa).

N-acetylserine is present on Ser-2. The 156-residue stretch at 11–166 (TNGKVLLKTT…NPHKIKSCEV (156 aa)) folds into the PPIase cyclophilin-type domain. Residues Asn-109 and Asn-201 are each glycosylated (N-linked (GlcNAc...) asparagine). Residues 206–230 (SFGEEAEEEEEEVNRVSQSMKGKSK) are a coiled coil. Disordered stretches follow at residues 206–386 (SFGE…DQTL) and 398–472 (QAIA…KERR). Residues 231–241 (SSHDLLKDDPH) show a composition bias toward basic and acidic residues. Over residues 257 to 268 (DLVDDGEDESAE) the composition is skewed to acidic residues. 3 stretches are compositionally biased toward basic and acidic residues: residues 269–286 (HDEY…ERIA), 304–347 (EVEK…KRSE), and 359–371 (EYRR…EALR). Positions 306-377 (EKKSVSRSEE…EALRKQQSKK (72 aa)) form a coiled coil. Ser-346 is subject to Phosphoserine. The span at 404 to 418 (PENDIPETEVEDDEG) shows a compositional bias: acidic residues. Composition is skewed to basic and acidic residues over residues 425–437 (QFED…KDAS) and 457–472 (RREE…KERR).

This sequence belongs to the cyclophilin-type PPIase family. Part of the activated spliceosome B/catalytic step 1 spliceosome, one of the forms of the spliceosome which has a well-formed active site but still cannot catalyze the branching reaction and is composed at least of 52 proteins, the U2, U5 and U6 snRNAs and the pre-mRNA. Recruited during early steps of activated spliceosome B maturation, it is probably one of the first proteins released from this complex as he matures to the spliceosome C complex. Component of the minor spliceosome, which splices U12-type introns.

The protein resides in the nucleus. Its function is as follows. As part of the spliceosome, plays a role in pre-mRNA splicing. Probable inactive PPIase with no peptidyl-prolyl cis-trans isomerase activity. As a component of the minor spliceosome, involved in the splicing of U12-type introns in pre-mRNAs. This chain is Spliceosome-associated protein CWC27 homolog, found in Homo sapiens (Human).